The primary structure comprises 307 residues: Metapyrocatechase (307 aa).

VOC domains lie at 7–122 (RPGH…LYAD) and 150–269 (RFDH…VFCG). Fe cation contacts are provided by H153, H214, and E265.

Belongs to the extradiol ring-cleavage dioxygenase family. As to quaternary structure, homotetramer. Fe(2+) is required as a cofactor.

The enzyme catalyses catechol + O2 = (2Z,4E)-2-hydroxy-6-oxohexa-2,4-dienoate + H(+). Its pathway is xenobiotic degradation; toluene degradation. This is Metapyrocatechase (bztE) from Pseudomonas aeruginosa.